Consider the following 373-residue polypeptide: Chaperone protein DnaJ (373 aa).

Residues 4–68 (NYYQILGVSK…QTRAAYDRLG (65 aa)) enclose the J domain. The CR-type zinc finger occupies 136 to 214 (GIEKNISFSS…CHGMGRYHKQ (79 aa)). Residues Cys149, Cys152, Cys166, Cys169, Cys188, Cys191, Cys202, and Cys205 each contribute to the Zn(2+) site. CXXCXGXG motif repeat units lie at residues 149–156 (CDTCHGSG), 166–173 (CDACSGVG), 188–195 (CHKCQGNG), and 202–209 (CKKCHGMG).

It belongs to the DnaJ family. As to quaternary structure, homodimer. Requires Zn(2+) as cofactor.

It is found in the cytoplasm. Participates actively in the response to hyperosmotic and heat shock by preventing the aggregation of stress-denatured proteins and by disaggregating proteins, also in an autonomous, DnaK-independent fashion. Unfolded proteins bind initially to DnaJ; upon interaction with the DnaJ-bound protein, DnaK hydrolyzes its bound ATP, resulting in the formation of a stable complex. GrpE releases ADP from DnaK; ATP binding to DnaK triggers the release of the substrate protein, thus completing the reaction cycle. Several rounds of ATP-dependent interactions between DnaJ, DnaK and GrpE are required for fully efficient folding. Also involved, together with DnaK and GrpE, in the DNA replication of plasmids through activation of initiation proteins. This is Chaperone protein DnaJ from Rickettsia peacockii (strain Rustic).